Here is a 186-residue protein sequence, read N- to C-terminus: UPF0303 protein ZMO1353 (186 aa).

This sequence belongs to the UPF0303 family.

In Zymomonas mobilis subsp. mobilis (strain ATCC 31821 / ZM4 / CP4), this protein is UPF0303 protein ZMO1353.